The primary structure comprises 481 residues: Cobyric acid synthase (481 aa).

The GATase cobBQ-type domain maps to 248–435; it reads NTVIAVPMLP…LHGLFHGGAF (188 aa). C329 serves as the catalytic Nucleophile. Residue H427 is part of the active site.

It belongs to the CobB/CobQ family. CobQ subfamily.

The protein operates within cofactor biosynthesis; adenosylcobalamin biosynthesis. Functionally, catalyzes amidations at positions B, D, E, and G on adenosylcobyrinic A,C-diamide. NH(2) groups are provided by glutamine, and one molecule of ATP is hydrogenolyzed for each amidation. In Granulibacter bethesdensis (strain ATCC BAA-1260 / CGDNIH1), this protein is Cobyric acid synthase.